The chain runs to 124 residues: MRHYEIVFIVHPDQSEQVPAMIERYKTTITSHGGQIHRVEDWGRRQLAYMIEKLAKAHYVCMNIECDQTTLDELEHAFKFNDAVLRHLIVKMKKAETGPSPMMKEVQREEAKKAAAAQPTEAQA.

A disordered region spans residues 96 to 124 (ETGPSPMMKEVQREEAKKAAAAQPTEAQA). Residues 114 to 124 (AAAAQPTEAQA) show a composition bias toward low complexity.

Belongs to the bacterial ribosomal protein bS6 family.

Functionally, binds together with bS18 to 16S ribosomal RNA. The polypeptide is Small ribosomal subunit protein bS6 (Burkholderia lata (strain ATCC 17760 / DSM 23089 / LMG 22485 / NCIMB 9086 / R18194 / 383)).